Reading from the N-terminus, the 301-residue chain is Quinolinate synthase (301 aa).

2 residues coordinate iminosuccinate: H21 and S38. C83 contributes to the [4Fe-4S] cluster binding site. Residues 109-111 (YIN) and S126 each bind iminosuccinate. C169 lines the [4Fe-4S] cluster pocket. Iminosuccinate is bound by residues 195-197 (HPE) and T212. Residue C257 coordinates [4Fe-4S] cluster.

It belongs to the quinolinate synthase family. Type 2 subfamily. Requires [4Fe-4S] cluster as cofactor.

The protein localises to the cytoplasm. It catalyses the reaction iminosuccinate + dihydroxyacetone phosphate = quinolinate + phosphate + 2 H2O + H(+). It functions in the pathway cofactor biosynthesis; NAD(+) biosynthesis; quinolinate from iminoaspartate: step 1/1. Functionally, catalyzes the condensation of iminoaspartate with dihydroxyacetone phosphate to form quinolinate. In Clostridium perfringens (strain SM101 / Type A), this protein is Quinolinate synthase.